A 159-amino-acid polypeptide reads, in one-letter code: Small ribosomal subunit protein uS7 (159 aa).

This sequence belongs to the universal ribosomal protein uS7 family. As to quaternary structure, part of the 30S ribosomal subunit. Contacts proteins S9 and S11.

Its function is as follows. One of the primary rRNA binding proteins, it binds directly to 16S rRNA where it nucleates assembly of the head domain of the 30S subunit. Is located at the subunit interface close to the decoding center, probably blocks exit of the E-site tRNA. This is Small ribosomal subunit protein uS7 from Elusimicrobium minutum (strain Pei191).